Here is a 106-residue protein sequence, read N- to C-terminus: Large ribosomal subunit protein uL23 (106 aa).

This sequence belongs to the universal ribosomal protein uL23 family. In terms of assembly, part of the 50S ribosomal subunit. Contacts protein L29, and trigger factor when it is bound to the ribosome.

In terms of biological role, one of the early assembly proteins it binds 23S rRNA. One of the proteins that surrounds the polypeptide exit tunnel on the outside of the ribosome. Forms the main docking site for trigger factor binding to the ribosome. The sequence is that of Large ribosomal subunit protein uL23 from Acinetobacter baylyi (strain ATCC 33305 / BD413 / ADP1).